The primary structure comprises 474 residues: tRNA-2-methylthio-N(6)-dimethylallyladenosine synthase (474 aa).

Positions 3 to 120 (KKLHIKTWGC…LPEMINSVRG (118 aa)) constitute an MTTase N-terminal domain. [4Fe-4S] cluster is bound by residues C12, C49, C83, C157, C161, and C164. Positions 143-378 (RADGPSAFVS…INQQVTAWSR (236 aa)) constitute a Radical SAM core domain. Positions 378 to 441 (RRMLGTTQRI…TNSMRGKVVR (64 aa)) constitute a TRAM domain.

The protein belongs to the methylthiotransferase family. MiaB subfamily. In terms of assembly, monomer. The cofactor is [4Fe-4S] cluster.

It localises to the cytoplasm. The enzyme catalyses N(6)-dimethylallyladenosine(37) in tRNA + (sulfur carrier)-SH + AH2 + 2 S-adenosyl-L-methionine = 2-methylsulfanyl-N(6)-dimethylallyladenosine(37) in tRNA + (sulfur carrier)-H + 5'-deoxyadenosine + L-methionine + A + S-adenosyl-L-homocysteine + 2 H(+). Its function is as follows. Catalyzes the methylthiolation of N6-(dimethylallyl)adenosine (i(6)A), leading to the formation of 2-methylthio-N6-(dimethylallyl)adenosine (ms(2)i(6)A) at position 37 in tRNAs that read codons beginning with uridine. This is tRNA-2-methylthio-N(6)-dimethylallyladenosine synthase from Enterobacter sp. (strain 638).